A 133-amino-acid polypeptide reads, in one-letter code: MARVTVEDCIDKVDNRFELVLLAGHRARQISQGAQITVPRDNDKNPVIALREIADETLSPDDLKEDLIHSLQKHVEVDEPEADGEVIADQTGAAVAATETDDAEDNITFDRMTEEDLLAGIEGLVPPEKSDDY.

Belongs to the RNA polymerase subunit omega family. The RNAP catalytic core consists of 2 alpha, 1 beta, 1 beta' and 1 omega subunit. When a sigma factor is associated with the core the holoenzyme is formed, which can initiate transcription.

The catalysed reaction is RNA(n) + a ribonucleoside 5'-triphosphate = RNA(n+1) + diphosphate. Its function is as follows. Promotes RNA polymerase assembly. Latches the N- and C-terminal regions of the beta' subunit thereby facilitating its interaction with the beta and alpha subunits. The chain is DNA-directed RNA polymerase subunit omega from Mesorhizobium japonicum (strain LMG 29417 / CECT 9101 / MAFF 303099) (Mesorhizobium loti (strain MAFF 303099)).